Consider the following 174-residue polypeptide: Chorismate pyruvate-lyase (174 aa).

Substrate is bound by residues Met-36, Arg-78, Leu-116, and Glu-157.

The protein belongs to the UbiC family. In terms of assembly, monomer.

The protein localises to the cytoplasm. It catalyses the reaction chorismate = 4-hydroxybenzoate + pyruvate. It participates in cofactor biosynthesis; ubiquinone biosynthesis. Functionally, removes the pyruvyl group from chorismate, with concomitant aromatization of the ring, to provide 4-hydroxybenzoate (4HB) for the ubiquinone pathway. This chain is Chorismate pyruvate-lyase, found in Yersinia pestis bv. Antiqua (strain Angola).